Here is a 631-residue protein sequence, read N- to C-terminus: Phosphomethylpyrimidine synthase (631 aa).

Residues Asn-239, Met-268, Tyr-297, His-333, 353–355, 394–397, and Glu-433 each bind substrate; these read SRG and DGLR. His-437 lines the Zn(2+) pocket. Residue Tyr-460 coordinates substrate. Residue His-501 participates in Zn(2+) binding. [4Fe-4S] cluster contacts are provided by Cys-581, Cys-584, and Cys-589.

The protein belongs to the ThiC family. As to quaternary structure, homodimer. [4Fe-4S] cluster is required as a cofactor.

It catalyses the reaction 5-amino-1-(5-phospho-beta-D-ribosyl)imidazole + S-adenosyl-L-methionine = 4-amino-2-methyl-5-(phosphooxymethyl)pyrimidine + CO + 5'-deoxyadenosine + formate + L-methionine + 3 H(+). It participates in cofactor biosynthesis; thiamine diphosphate biosynthesis. In terms of biological role, catalyzes the synthesis of the hydroxymethylpyrimidine phosphate (HMP-P) moiety of thiamine from aminoimidazole ribotide (AIR) in a radical S-adenosyl-L-methionine (SAM)-dependent reaction. The polypeptide is Phosphomethylpyrimidine synthase (Salmonella agona (strain SL483)).